Reading from the N-terminus, the 165-residue chain is Crossover junction endodeoxyribonuclease RuvC (165 aa).

Residues D7, E67, and D140 contribute to the active site. D7, E67, and D140 together coordinate Mg(2+).

Belongs to the RuvC family. As to quaternary structure, homodimer which binds Holliday junction (HJ) DNA. The HJ becomes 2-fold symmetrical on binding to RuvC with unstacked arms; it has a different conformation from HJ DNA in complex with RuvA. In the full resolvosome a probable DNA-RuvA(4)-RuvB(12)-RuvC(2) complex forms which resolves the HJ. It depends on Mg(2+) as a cofactor.

It is found in the cytoplasm. It carries out the reaction Endonucleolytic cleavage at a junction such as a reciprocal single-stranded crossover between two homologous DNA duplexes (Holliday junction).. Functionally, the RuvA-RuvB-RuvC complex processes Holliday junction (HJ) DNA during genetic recombination and DNA repair. Endonuclease that resolves HJ intermediates. Cleaves cruciform DNA by making single-stranded nicks across the HJ at symmetrical positions within the homologous arms, yielding a 5'-phosphate and a 3'-hydroxyl group; requires a central core of homology in the junction. The consensus cleavage sequence is 5'-(A/T)TT(C/G)-3'. Cleavage occurs on the 3'-side of the TT dinucleotide at the point of strand exchange. HJ branch migration catalyzed by RuvA-RuvB allows RuvC to scan DNA until it finds its consensus sequence, where it cleaves and resolves the cruciform DNA. This Caldanaerobacter subterraneus subsp. tengcongensis (strain DSM 15242 / JCM 11007 / NBRC 100824 / MB4) (Thermoanaerobacter tengcongensis) protein is Crossover junction endodeoxyribonuclease RuvC.